We begin with the raw amino-acid sequence, 473 residues long: Sorting nexin-17 (473 aa).

A PX domain is found at 1-108 (MHFSIPETEV…SFLRKAQQET (108 aa)). A 1,2-diacyl-sn-glycero-3-phospho-(1D-myo-inositol-3-phosphate) is bound by residues Arg-35, Ser-37, Lys-61, and Arg-74. The Ras-associating domain maps to 114–205 (EEVQLEIYLS…YRIILRKSYW (92 aa)). An FERM-like region spans residues 114–433 (EEVQLEIYLS…DPNREQVVKL (320 aa)). The interval 269–433 (GYIKFDPCIT…DPNREQVVKL (165 aa)) is PTB-like F3 module. The tract at residues 391 to 431 (SIKKQMQKKRLNGSLQRSDSQQAVKSPPILDSPDPNREQVV) is disordered. A compositionally biased stretch (polar residues) spans 403 to 414 (GSLQRSDSQQAV).

Belongs to the sorting nexin family. As to quaternary structure, monomer. Interacts with CCDC22, CCDC93, DSCR3 and VPS35L; the interaction with DSCR3 is direct and associates SNX17 with the retriever and CCC complexes.

It is found in the cytoplasm. The protein resides in the early endosome. The protein localises to the cytoplasmic vesicle membrane. Critical regulator of endosomal recycling of numerous surface proteins, including integrins, signaling receptor and channels. Binds to NPxY sequences in the cytoplasmic tails of target cargos. Associates with retriever and CCC complexes to prevent lysosomal degradation and promote cell surface recycling of numerous cargos such as integrins ITGB1, ITGB5 and their associated alpha subunits. Also required for maintenance of normal cell surface levels of APP and LRP1. Interacts with membranes containing phosphatidylinositol 3-phosphate (PtdIns(3P)). This Danio rerio (Zebrafish) protein is Sorting nexin-17 (snx17).